Here is a 321-residue protein sequence, read N- to C-terminus: uncharacterized protein (321 aa).

This is an uncharacterized protein from Aquifex aeolicus (strain VF5).